The following is an 828-amino-acid chain: MQGTPTMKIIENILKNHLLQPLSQNIFVLTNNYITEVQKFSPLSKNTNLVVGQILNFQKIQDSQKLNLVEVNIGIKVVKIVCGASNLQNGKKVIVASEGSFLEGINSTLKNKKIYGVFSEGMLCALEELGISNKFLTPQEQEGIYLFDDPNDQIALGSNALIPLGMDGFILELGITPNRGDLLSHIGFAKDLQAVLASQNSNKKKEKKTINYKTKNSKDQTNRKTTPKLNPDFFAKLPQSPLKVQIESDSCYEYNVCILENITIKPSPLWLRNTLLQSGINPINNVVDITNLILIEYGIPLHAFDSGTIQKIKVRKAFPQETITTLNQNDFVLDENDLVITDGKKAIALAGIVGLLESSIKPTTTKIILEAAYFSPQTIAQTCQKLKNKTESSLRFERGIDQNLIPLAFQKACQLLVTLANAKITYQPTITKQKIRTNPTISLDLDFITRKIGFSLCPTQIKNWLLNLDYQIHTPKNLTLQNKNEQLNLQAPLRRYDVKIKEDVISDLTRFYGCHKLPPQTIQIPTQGKLTLKQKNIRELRKLLVNLGFYETITYSLISSEMFEAFAPQKPFIKIMNPLSQDKMILRQSLLSSLVEILSYQHKRQTFDTAFFEIGKAYFPNQEKLSLAFVLSGNFLNTLWHKQDVSSSFFVTKGILEKISSFLGITLTYQKTQKHSNFHPGMQANLLFNNQIIGVIGKTHPQLNAKHHLKESFLCELFLSDEILNTTKTLTFRPIPKFPTVIRDLSFLVDTKYSFYQIEQIIKQTTPFDLIKCELFDVYQTPTTKEKQSFALRFFFNNLDKNLEKQDVEHCMKKITYNLIKHFRIEIR.

Residues 43-161 (LSKNTNLVVG…DQIALGSNAL (119 aa)) enclose the tRNA-binding domain. The segment at 203 to 230 (KKKEKKTINYKTKNSKDQTNRKTTPKLN) is disordered. The region spanning 436–519 (RTNPTISLDL…RFYGCHKLPP (84 aa)) is the B5 domain. Mg(2+)-binding residues include Asp497, Asp503, and Asp507. Positions 736 to 828 (PKFPTVIRDL…LIKHFRIEIR (93 aa)) constitute an FDX-ACB domain.

The protein belongs to the phenylalanyl-tRNA synthetase beta subunit family. Type 1 subfamily. Tetramer of two alpha and two beta subunits. Requires Mg(2+) as cofactor.

It is found in the cytoplasm. The enzyme catalyses tRNA(Phe) + L-phenylalanine + ATP = L-phenylalanyl-tRNA(Phe) + AMP + diphosphate + H(+). The polypeptide is Phenylalanine--tRNA ligase beta subunit (Aster yellows witches'-broom phytoplasma (strain AYWB)).